The chain runs to 339 residues: DNA-directed RNA polymerase subunit alpha (339 aa).

The tract at residues 1-235 (MTIQKNWQEL…DQLNVFVNFE (235 aa)) is alpha N-terminal domain (alpha-NTD). Residues 251 to 339 (FNPAFLKKVD…ELAKRFEDHY (89 aa)) are alpha C-terminal domain (alpha-CTD).

This sequence belongs to the RNA polymerase alpha chain family. As to quaternary structure, homodimer. The RNAP catalytic core consists of 2 alpha, 1 beta, 1 beta' and 1 omega subunit. When a sigma factor is associated with the core the holoenzyme is formed, which can initiate transcription.

It carries out the reaction RNA(n) + a ribonucleoside 5'-triphosphate = RNA(n+1) + diphosphate. Its function is as follows. DNA-dependent RNA polymerase catalyzes the transcription of DNA into RNA using the four ribonucleoside triphosphates as substrates. The chain is DNA-directed RNA polymerase subunit alpha from Afipia carboxidovorans (strain ATCC 49405 / DSM 1227 / KCTC 32145 / OM5) (Oligotropha carboxidovorans).